Reading from the N-terminus, the 118-residue chain is Small ribosomal subunit protein uS13 (118 aa).

The segment at 94–118 (SLPLRGQRTKTNARTRKGPRKPIKR) is disordered.

The protein belongs to the universal ribosomal protein uS13 family. As to quaternary structure, part of the 30S ribosomal subunit. Forms a loose heterodimer with protein S19. Forms two bridges to the 50S subunit in the 70S ribosome.

Functionally, located at the top of the head of the 30S subunit, it contacts several helices of the 16S rRNA. In the 70S ribosome it contacts the 23S rRNA (bridge B1a) and protein L5 of the 50S subunit (bridge B1b), connecting the 2 subunits; these bridges are implicated in subunit movement. Contacts the tRNAs in the A and P-sites. This chain is Small ribosomal subunit protein uS13, found in Pseudoalteromonas translucida (strain TAC 125).